A 701-amino-acid polypeptide reads, in one-letter code: Elongation factor G (701 aa).

Residues 8 to 290 enclose the tr-type G domain; it reads ARYRNIGISA…AVIEYLPAPT (283 aa). Residues 17-24, 88-92, and 142-145 each bind GTP; these read AHIDAGKT, DTPGH, and NKMD.

The protein belongs to the TRAFAC class translation factor GTPase superfamily. Classic translation factor GTPase family. EF-G/EF-2 subfamily.

It is found in the cytoplasm. Catalyzes the GTP-dependent ribosomal translocation step during translation elongation. During this step, the ribosome changes from the pre-translocational (PRE) to the post-translocational (POST) state as the newly formed A-site-bound peptidyl-tRNA and P-site-bound deacylated tRNA move to the P and E sites, respectively. Catalyzes the coordinated movement of the two tRNA molecules, the mRNA and conformational changes in the ribosome. The sequence is that of Elongation factor G from Sodalis glossinidius (strain morsitans).